A 238-amino-acid polypeptide reads, in one-letter code: MAVVTLAEMMEAGAHFGHQTRRWNPKMSRYIYCARNGVHIIDLVQTAVCMNNAYKWTRSAARSGKRFLFVGTKKQASEVVALEAARCGASYVNQRWLGGMLTNWTTMKARIDRLKDLERMESSGAIAMRPKKEGAVLRRELERLQKYLGGLKNMRRLPDVVVLVDQRRESNAVLEARKLDIPLVSMLDTNCDPDLCEVPIPCNDDAVRSVQLILGRLADAINEGRHGSNDQRGGDSEG.

Belongs to the universal ribosomal protein uS2 family.

The polypeptide is Small ribosomal subunit protein uS2 (Synechococcus sp. (strain CC9605)).